The sequence spans 657 residues: Trifunctional protein RibF/MnmA (657 aa).

The segment at 1 to 141 (MLSIINLTSK…VVKKDHCSTS (141 aa)) is FMN adenylyltransferase. The interval 158–282 (LLLTPFYLKG…DKKAALSFFH (125 aa)) is riboflavin kinase. Residues 283-657 (KQEKPKVVVA…GGGKITKIIK (375 aa)) are tRNA-specific 2-thiouridylase MnmA. Residues 292–299 (ALSGGVDS) and methionine 318 each bind ATP. An interaction with target base in tRNA region spans residues 389-391 (NPD). Cysteine 394 serves as the catalytic Nucleophile. A disulfide bridge connects residues cysteine 394 and cysteine 492. ATP is bound at residue glycine 420. The segment at 442–444 (KDQ) is interaction with tRNA. The active-site Cysteine persulfide intermediate is cysteine 492.

The protein in the N-terminal section; belongs to the RibF family. In the C-terminal section; belongs to the MnmA/TRMU family.

It is found in the cytoplasm. It carries out the reaction riboflavin + ATP = FMN + ADP + H(+). The enzyme catalyses FMN + ATP + H(+) = FAD + diphosphate. It catalyses the reaction S-sulfanyl-L-cysteinyl-[protein] + uridine(34) in tRNA + AH2 + ATP = 2-thiouridine(34) in tRNA + L-cysteinyl-[protein] + A + AMP + diphosphate + H(+). It participates in cofactor biosynthesis; FAD biosynthesis; FAD from FMN: step 1/1. The protein operates within cofactor biosynthesis; FMN biosynthesis; FMN from riboflavin (ATP route): step 1/1. Functionally, involved in FAD and FMN biosynthesis. In terms of biological role, catalyzes the 2-thiolation of uridine at the wobble position (U34) of tRNA, leading to the formation of s(2)U34. The chain is Trifunctional protein RibF/MnmA (ribF/mnmA) from Mycoplasmoides gallisepticum (strain R(low / passage 15 / clone 2)) (Mycoplasma gallisepticum).